A 48-amino-acid chain; its full sequence is Histone H4 (48 aa).

The segment covering 1-14 (MGGKGGKGGKGLGK) has biased composition (gly residues). Residues 1–23 (MGGKGGKGGKGLGKVGAKKRHSR) are disordered.

The protein belongs to the histone H4 family. As to quaternary structure, the nucleosome is a histone octamer containing two molecules each of H2A, H2B, H3 and H4 assembled in one H3-H4 heterotetramer and two H2A-H2B heterodimers. The octamer wraps approximately 147 bp of DNA.

It localises to the nucleus. The protein localises to the chromosome. Its function is as follows. Core component of nucleosome. Nucleosomes wrap and compact DNA into chromatin, limiting DNA accessibility to the cellular machineries which require DNA as a template. Histones thereby play a central role in transcription regulation, DNA repair, DNA replication and chromosomal stability. DNA accessibility is regulated via a complex set of post-translational modifications of histones, also called histone code, and nucleosome remodeling. The sequence is that of Histone H4 from Blepharisma japonicum.